Consider the following 1392-residue polypeptide: Condensin complex subunit 1 (1392 aa).

An interaction with SMC2 and SMC4 region spans residues M1–P593. Residues S20 and S575 each carry the phosphoserine modification. 3 disordered regions span residues E569–D602, R945–M966, and F1293–S1392. A compositionally biased stretch (basic and acidic residues) spans R945 to A960. A phosphoserine mark is found at S1300, S1305, S1320, and S1323. T1329 carries the post-translational modification Phosphothreonine. The short motif at P1332 to K1353 is the Bipartite nuclear localization signal element. The span at Q1344–K1353 shows a compositional bias: basic residues. Phosphoserine is present on residues S1358, S1361, S1362, and S1367. Acidic residues predominate over residues E1360 to E1373. 2 positions are modified to phosphothreonine; by CDK1: T1375 and T1380. At S1386 the chain carries Phosphoserine.

This sequence belongs to the CND1 (condensin subunit 1) family. In terms of assembly, component of the condensin complex, which contains the SMC2 and SMC4 heterodimer, and three non SMC subunits that probably regulate the complex: NCAPH/BRRN1, NCAPD2/CAPD2 and NCAPG. Interacts with histones H1 and H3. Post-translationally, phosphorylated by CDK1. Its phosphorylation, as well as that of NCAPH and NCAPG subunits, activates the condensin complex and is required for chromosome condensation.

It is found in the nucleus. The protein resides in the cytoplasm. It localises to the chromosome. Regulatory subunit of the condensin complex, a complex required for conversion of interphase chromatin into mitotic-like condense chromosomes. The condensin complex probably introduces positive supercoils into relaxed DNA in the presence of type I topoisomerases and converts nicked DNA into positive knotted forms in the presence of type II topoisomerases. May target the condensin complex to DNA via its C-terminal domain. May promote the resolution of double-strand DNA catenanes (intertwines) between sister chromatids. Condensin-mediated compaction likely increases tension in catenated sister chromatids, providing directionality for type II topoisomerase-mediated strand exchanges toward chromatid decatenation. Required for decatenation of non-centromeric ultrafine DNA bridges during anaphase. Early in neurogenesis, may play an essential role to ensure accurate mitotic chromosome condensation in neuron stem cells, ultimately affecting neuron pool and cortex size. In Mus musculus (Mouse), this protein is Condensin complex subunit 1 (Ncapd2).